The primary structure comprises 77 residues: UPF0349 protein lmo2392 (77 aa).

The protein belongs to the UPF0349 family.

This Listeria monocytogenes serovar 1/2a (strain ATCC BAA-679 / EGD-e) protein is UPF0349 protein lmo2392.